Here is a 20-residue protein sequence, read N- to C-terminus: Cytochrome P450-RR1 (20 aa).

It belongs to the cytochrome P450 family. Heme is required as a cofactor.

In terms of biological role, P450-RRI catalyzes the O-dealkylation of 2-ethoxyphenol and 2-methoxyphenol to produce catechol. The cytochrome binds other ortho-substituted phenols, including 2-ethoxyphenol, 2-methylphenol and 2-chlorophenol. This is Cytochrome P450-RR1 from Rhodococcus rhodochrous.